We begin with the raw amino-acid sequence, 96 residues long: Large ribosomal subunit protein eL43 (96 aa).

The segment at 41–62 (CPVCAFPKLKRAGTSIWVCEKC) adopts a C4-type zinc-finger fold.

The protein belongs to the eukaryotic ribosomal protein eL43 family. The cofactor is Zn(2+).

This is Large ribosomal subunit protein eL43 from Methanococcus maripaludis (strain C5 / ATCC BAA-1333).